The following is a 331-amino-acid chain: Probable zinc-binding oxidoreductase, mitochondrial (331 aa).

Residues 1 to 29 (MASVTSVPKTGRSVNQDVPATTLTLQTRP) show a composition bias toward polar residues. Positions 1–34 (MASVTSVPKTGRSVNQDVPATTLTLQTRPTPAPN) are disordered.

The protein belongs to the zinc-containing alcohol dehydrogenase family. Quinone oxidoreductase subfamily.

The protein localises to the mitochondrion. The polypeptide is Probable zinc-binding oxidoreductase, mitochondrial (Arthroderma benhamiae (strain ATCC MYA-4681 / CBS 112371) (Trichophyton mentagrophytes)).